Here is a 173-residue protein sequence, read N- to C-terminus: Calcium-binding protein 5 (173 aa).

EF-hand domains are found at residues 28–63, 82–99, 105–140, and 142–173; these read DEIE…MGYM, GRVD…KLLA, IGVQ…LLGD, and LTSQ…MMSR. Ca(2+) is bound by residues aspartate 41, aspartate 43, aspartate 45, and aspartate 52. Residues aspartate 118, asparagine 120, aspartate 122, glutamate 124, glutamate 129, aspartate 155, asparagine 157, aspartate 159, threonine 161, and glutamate 166 each contribute to the Ca(2+) site.

In terms of assembly, interacts with CACNA1C (via C-terminal CDB motif) in a calcium-dependent manner. Interacts with STXBP1. Interacts with MYO6. As to expression, expressed in the retina (at protein level).

The protein resides in the cytoplasm. In terms of biological role, inhibits calcium-dependent inactivation of L-type calcium channel and shifts voltage dependence of activation to more depolarized membrane potentials. Involved in the transmission of light signals. May positively regulate neurotransmitter vesicle endocytosis and exocytosis in a salt-dependent manner. May play a role in the extension and network organization of neurites. The chain is Calcium-binding protein 5 (CABP5) from Bos taurus (Bovine).